Here is a 607-residue protein sequence, read N- to C-terminus: Cytosolic Fe-S cluster assembly factor NAR1 (607 aa).

[4Fe-4S] cluster is bound by residues C20, C82, C85, C88, C204, and C259. The interval 430–476 is disordered; the sequence is KPNTGKSTNTTTTTTKSKVNPLAARRRARIANNRGKPETKSTSEVNS. Low complexity predominate over residues 432-447; the sequence is NTGKSTNTTTTTTKSK. Residues C496 and C500 each coordinate [4Fe-4S] cluster.

This sequence belongs to the NARF family.

Functionally, component of the cytosolic Fe/S protein assembly machinery. Required for maturation of extramitochondrial Fe/S proteins. May play a role in the transfer of pre-assembled Fe/S clusters to target apoproteins. This Candida albicans (strain SC5314 / ATCC MYA-2876) (Yeast) protein is Cytosolic Fe-S cluster assembly factor NAR1 (NAR1).